The chain runs to 346 residues: 3 beta-hydroxysteroid dehydrogenase/Delta 5--&gt;4-isomerase (346 aa).

The active-site Proton acceptor is the Y147. K151 lines the NAD(+) pocket.

Belongs to the 3-beta-HSD family.

It carries out the reaction a 3beta-hydroxy-Delta(5)-steroid + NAD(+) = a 3-oxo-Delta(5)-steroid + NADH + H(+). The enzyme catalyses a 3-oxo-Delta(5)-steroid = a 3-oxo-Delta(4)-steroid. The protein operates within lipid metabolism; steroid biosynthesis. Catalyzes the oxidative conversion of Delta(5)-ene-3-beta-hydroxy steroid, and the oxidative conversion of ketosteroids. The 3-beta-HSD enzymatic system plays a crucial role in the biosynthesis of all classes of hormonal steroids. During viral infection, steroid production contributes to virulence by inhibiting the host inflammatory response. The sequence is that of 3 beta-hydroxysteroid dehydrogenase/Delta 5--&gt;4-isomerase (OPG174) from Monkeypox virus.